The following is a 135-amino-acid chain: CTP pyrophosphohydrolase (135 aa).

The region spanning 2–127 is the Nudix hydrolase domain; that stretch reads KMIEVVAAII…DIPLLEAFMA (126 aa). Residues 34 to 39, R72, and D118 contribute to the substrate site; that span reads FAGGKV. The short motif at 37–58 is the Nudix box element; that stretch reads GKVEPDESQRQALVRELREELG.

It belongs to the Nudix hydrolase family. As to quaternary structure, monomer. The cofactor is Mg(2+). Mn(2+) is required as a cofactor.

It carries out the reaction CTP + H2O = CMP + diphosphate + H(+). The catalysed reaction is dCTP + H2O = dCMP + diphosphate + H(+). In terms of biological role, hydrolase with a preference for pyrimidine substrates. Has high activity with 5-methyl-dCTP, and much lower activity with CTP, dCTP, 5-hydroxy-dCTP, 2-hydroxy-dATP and 8-hydroxy-dGTP. This is CTP pyrophosphohydrolase (nudG) from Escherichia coli (strain K12).